The primary structure comprises 201 residues: Large ribosomal subunit protein bL12m (201 aa).

A mitochondrion-targeting transit peptide spans 1 to 38 (MLPVAASRCLWGPRLGLRGAALRLARQQMPSVCAARQL). Disordered regions lie at residues 37–60 (QLRSSSHRRSEALAGAPLDNAPKE) and 109–130 (VSAAAPASEAAEEEDVPKQKER). N6-acetyllysine is present on residues Lys128, Lys141, Lys145, and Lys147. Position 153 is an N6-acetyllysine; alternate (Lys153). At Lys153 the chain carries N6-succinyllysine; alternate. A Glycyl lysine isopeptide (Lys-Gly) (interchain with G-Cter in ubiquitin) cross-link involves residue Lys153. Position 165 is an N6-succinyllysine (Lys165). Lys166 and Lys176 each carry N6-acetyllysine. N6-acetyllysine; alternate is present on Lys181. Lys181 is modified (N6-succinyllysine; alternate). Lys188 carries the post-translational modification N6-acetyllysine.

Belongs to the bacterial ribosomal protein bL12 family. In terms of assembly, component of the mitochondrial ribosome large subunit (39S) which comprises a 16S rRNA and about 50 distinct proteins. Interacts with NOA1. Two mature forms are produced by differential two-step proteolytic cleavage. Cleaved by the mitochondrial processing protease to produce the long mature form and subsequently by the mitochondrial intermediate protease to produce the short mature form. In terms of processing, in the presence of CUL3, undergoes 'Lys-63'-linked ubiquitination at Lys-153 which results in proteasomal degradation.

The protein localises to the mitochondrion matrix. As a component of the mitochondrial large ribosomal subunit, plays a role in mitochondrial translation. When present in mitochondria as a free protein not associated with the ribosome, associates with mitochondrial RNA polymerase POLRMT to activate transcription. Required for POLRMT stability. This Mus musculus (Mouse) protein is Large ribosomal subunit protein bL12m (Mrpl12).